The following is a 699-amino-acid chain: Auxin response factor 10 (699 aa).

Disordered stretches follow at residues 108 to 136 (AAEA…DANN), 505 to 533 (TDLT…DDTK), and 551 to 595 (KNGN…SWSL). Residues 110 to 119 (EARREEENSR) show a composition bias toward basic and acidic residues. The span at 125–135 (FAKTLTQSDAN) shows a compositional bias: polar residues. The TF-B3 DNA-binding region spans 125-227 (FAKTLTQSDA…NIHVGLRRAK (103 aa)). Residues 570–593 (PNTSEGSDSGVTQGSPTKNTTPSW) show a composition bias toward polar residues. The 81-residue stretch at 613–693 (PGQCKVFVES…RKLRILTDAG (81 aa)) folds into the PB1 domain.

It belongs to the ARF family. Homodimers and heterodimers.

It is found in the nucleus. Functionally, auxin response factors (ARFs) are transcriptional factors that bind specifically to the DNA sequence 5'-TGTCTC-3' found in the auxin-responsive promoter elements (AuxREs). The protein is Auxin response factor 10 (ARF10) of Oryza sativa subsp. indica (Rice).